The following is a 188-amino-acid chain: Elongation factor P-like protein (188 aa).

It belongs to the elongation factor P family.

The polypeptide is Elongation factor P-like protein (Marinobacter nauticus (strain ATCC 700491 / DSM 11845 / VT8) (Marinobacter aquaeolei)).